A 121-amino-acid polypeptide reads, in one-letter code: UPF0145 protein SGR_4080 (121 aa).

The protein belongs to the UPF0145 family.

The chain is UPF0145 protein SGR_4080 from Streptomyces griseus subsp. griseus (strain JCM 4626 / CBS 651.72 / NBRC 13350 / KCC S-0626 / ISP 5235).